The following is a 183-amino-acid chain: Large ribosomal subunit protein uL5 (183 aa).

The protein belongs to the universal ribosomal protein uL5 family. As to quaternary structure, part of the 50S ribosomal subunit; part of the 5S rRNA/L5/L18/L25 subcomplex. Contacts the 5S rRNA and the P site tRNA. Forms a bridge to the 30S subunit in the 70S ribosome.

In terms of biological role, this is one of the proteins that bind and probably mediate the attachment of the 5S RNA into the large ribosomal subunit, where it forms part of the central protuberance. In the 70S ribosome it contacts protein S13 of the 30S subunit (bridge B1b), connecting the 2 subunits; this bridge is implicated in subunit movement. Contacts the P site tRNA; the 5S rRNA and some of its associated proteins might help stabilize positioning of ribosome-bound tRNAs. This chain is Large ribosomal subunit protein uL5, found in Leptospira biflexa serovar Patoc (strain Patoc 1 / Ames).